Reading from the N-terminus, the 416-residue chain is Tryptophan synthase beta chain (416 aa).

Lys98 is subject to N6-(pyridoxal phosphate)lysine.

Belongs to the TrpB family. As to quaternary structure, tetramer of two alpha and two beta chains. It depends on pyridoxal 5'-phosphate as a cofactor.

The enzyme catalyses (1S,2R)-1-C-(indol-3-yl)glycerol 3-phosphate + L-serine = D-glyceraldehyde 3-phosphate + L-tryptophan + H2O. The protein operates within amino-acid biosynthesis; L-tryptophan biosynthesis; L-tryptophan from chorismate: step 5/5. In terms of biological role, the beta subunit is responsible for the synthesis of L-tryptophan from indole and L-serine. The polypeptide is Tryptophan synthase beta chain (Ruegeria pomeroyi (strain ATCC 700808 / DSM 15171 / DSS-3) (Silicibacter pomeroyi)).